The following is a 78-amino-acid chain: U23-theraphotoxin-Cg1a 1 (78 aa).

Residues 1–21 (MKTSVLVTVLGLAVISVLCSA) form the signal peptide. Residues 22–49 (SQDEEQDMYDELLSAVFEVNDELQSEAR) constitute a propeptide that is removed on maturation. Disulfide bonds link cysteine 50–cysteine 64, cysteine 57–cysteine 69, and cysteine 63–cysteine 75.

It belongs to the neurotoxin 10 (Hwtx-1) family. 64 (Jztx-20) subfamily. As to expression, expressed by the venom gland.

Its subcellular location is the secreted. Probable ion channel inhibitor. The chain is U23-theraphotoxin-Cg1a 1 from Chilobrachys guangxiensis (Chinese earth tiger tarantula).